The sequence spans 300 residues: MNAKHRVTSHCDHELGICGISPEANEALPAKKPLEIYTFIDPLCAQCWSMEPILKKLKVEYGHYFRIRVLLAGKLNVWNACEAGKAKYTRPPVWVKGVSSSNMPYAGDIKLSDFHPYKASLAIKAAELQGPKAGHRFLRKLRETLFLQKQNITNEDVLKACANAAGLDVDAFIADLHSPSAAKALQCDVQTTNEMDVDTVPTFVFFNDNSEEAGIKISGQYPFSIYVQLLEDMLGFVPVKATPPTLEGLLQTYGFLATAEVAMVLDLSSEEAEKKLKTLMLQQKVEAVPYEYGTFWKWLM.

Belongs to the SpxH family. In terms of assembly, interacts with Spx.

It localises to the cytoplasm. Adapter protein required for efficient degradation of Spx by ClpXP under non-stress conditions. Interaction with Spx stabilizes Spx and exposes the C-terminus of Spx for recognition and proteolysis by ClpXP. In Shouchella clausii (strain KSM-K16) (Alkalihalobacillus clausii), this protein is ClpXP adapter protein SpxH.